The primary structure comprises 309 residues: Isoaspartyl peptidase/L-asparaginase (309 aa).

The Nucleophile role is filled by threonine 166. Substrate contacts are provided by residues 194-197 and 217-220; these read RVGD and TGHG.

This sequence belongs to the Ntn-hydrolase family. In terms of assembly, heterodimer of an alpha and beta chain produced by autocleavage. Post-translationally, cleaved into an alpha and beta chain by autocatalysis; this activates the enzyme. The N-terminal residue of the beta subunit is responsible for the nucleophile hydrolase activity.

Its subcellular location is the cytoplasm. The catalysed reaction is L-asparagine + H2O = L-aspartate + NH4(+). It catalyses the reaction Cleavage of a beta-linked Asp residue from the N-terminus of a polypeptide.. Functionally, has both L-asparaginase and beta-aspartyl peptidase activity. Does not have aspartylglucosaminidase activity and is inactive toward GlcNAc-L-Asn. Likewise, has no activity toward glutamine. The chain is Isoaspartyl peptidase/L-asparaginase (asrgl1) from Xenopus laevis (African clawed frog).